Consider the following 605-residue polypeptide: Capsid scaffolding protein (605 aa).

Residues His48, Ser116, and His139 each act as charge relay system in the active site. A disordered region spans residues 235–274 (ASDAPDLQKPDKALQSPPPASTDPATMLSGNAGEGATACG). An interaction with pAP region spans residues 281 to 300 (QDLISVPRNTFMTLLQTNLD). Disordered stretches follow at residues 403 to 431 (DYVP…FPGE) and 489 to 588 (PHQS…KSVS). Residues 410–416 (RSNKRKR) carry the Nuclear localization signal motif. The span at 568–579 (ASASGVAQSKEP) shows a compositional bias: polar residues. Residues 585–605 (KSVSAHLKSIFCEELLNKRVA) are interaction with major capsid protein.

This sequence belongs to the herpesviridae capsid scaffolding protein family. Homomultimer. Interacts with major capsid protein. As to quaternary structure, exists in a monomer-dimer equilibrium with the dimer being the active species. Post-translationally, capsid scaffolding protein is cleaved by assemblin after formation of the spherical procapsid. As a result, the capsid obtains its mature, icosahedral shape. Cleavages occur at two or more sites: release (R-site) and maturation (M-site).

It localises to the host cytoplasm. The protein localises to the host nucleus. It carries out the reaction Cleaves -Ala-|-Ser- and -Ala-|-Ala- bonds in the scaffold protein.. Functionally, acts as a scaffold protein by binding major capsid protein in the cytoplasm, inducing the nuclear localization of both proteins. Multimerizes in the nucleus such as major capsid protein forms the icosahedral T=16 capsid. Autocatalytic cleavage releases the assembly protein, and subsequently abolishes interaction with major capsid protein. Cleavages products are evicted from the capsid before or during DNA packaging. In terms of biological role, protease that plays an essential role in virion assembly within the nucleus. Catalyzes the cleavage of the assembly protein after formation of the spherical procapsid. By that cleavage, the capsid matures and gains its icosahedral shape. The cleavage sites seem to include -Ala-Ser-, -Ala-Ala-, as well as Ala-Thr bonds. Assemblin and cleavages products are evicted from the capsid before or during DNA packaging. Plays a major role in capsid assembly. Acts as a scaffold protein by binding major capsid protein. Multimerizes in the nucleus such as major capsid protein forms the icosahedral T=16 capsid. Cleaved by assemblin after capsid completion. The cleavages products are evicted from the capsid before or during DNA packaging. The chain is Capsid scaffolding protein from Homo sapiens (Human).